The following is a 249-amino-acid chain: MVSFDATEALAPYREGRGYGAIVFDRERLRQADASLFSPQSWGDRARPVDKGGRGGAWFVDAPFGRSVLRQYLRGGMAARVSRDRYLWKGAGRTRSFAEFRLMRELIKRKLPVPRPLAACYLREGLGYRAALLMERLENVRSLADHAQLAGRGAPWEATGQLIARFHRAGLDHPDLNAHNILFDAGGHGWLIDFDRGVLRIPATRWRERNLKRLHRSLLKLRGNRSGEDVDKDYERLHRAYELAWGRGY.

Residue Asp-175 is part of the active site.

Belongs to the protein kinase superfamily. KdkA/RfaP family.

It localises to the cell inner membrane. It catalyses the reaction an alpha-Kdo-(2-&gt;6)-lipid IVA + ATP = a 4-O-phospho-alpha-Kdo-(2-&gt;6)-lipid IVA + ADP + H(+). It participates in bacterial outer membrane biogenesis; LPS core biosynthesis. Catalyzes the ATP-dependent phosphorylation of the 3-deoxy-D-manno-octulosonic acid (Kdo) residue in Kdo-lipid IV(A) at the 4-OH position. The polypeptide is 3-deoxy-D-manno-octulosonic acid kinase (Xanthomonas oryzae pv. oryzae (strain PXO99A)).